A 473-amino-acid chain; its full sequence is Adenosylhomocysteinase (473 aa).

Substrate contacts are provided by T64, D139, and E199. 200–202 serves as a coordination point for NAD(+); sequence TTT. K229 and D233 together coordinate substrate. Residues N234, 263–268, E286, N321, 342–344, and N387 contribute to the NAD(+) site; these read GYGDVG and IGH.

Belongs to the adenosylhomocysteinase family. The cofactor is NAD(+).

The protein localises to the cytoplasm. It catalyses the reaction S-adenosyl-L-homocysteine + H2O = L-homocysteine + adenosine. The protein operates within amino-acid biosynthesis; L-homocysteine biosynthesis; L-homocysteine from S-adenosyl-L-homocysteine: step 1/1. Its function is as follows. May play a key role in the regulation of the intracellular concentration of adenosylhomocysteine. The sequence is that of Adenosylhomocysteinase from Paraburkholderia phymatum (strain DSM 17167 / CIP 108236 / LMG 21445 / STM815) (Burkholderia phymatum).